Consider the following 430-residue polypeptide: D-galactonate transporter (430 aa).

Topologically, residues 1–17 (MDIPVNAAKPGRRRYLT) are cytoplasmic. Residues 18 to 39 (LVMIFITVVICYVDRANLAVAS) traverse the membrane as a helical segment. Tyrosine 29 and arginine 32 together coordinate D-galactonate. Residues 40–50 (AHIQEEFGITK) lie on the Periplasmic side of the membrane. Residues 51–74 (AEMGYVFSAFAWLYTLCQIPGGWF) form a helical membrane-spanning segment. D-galactonate is bound at residue tyrosine 64. Residues 75–81 (LDRVGSR) lie on the Cytoplasmic side of the membrane. A helical transmembrane segment spans residues 82–100 (VTYFIAIFGWSVATLFQGF). Residues 101 to 103 (ATG) lie on the Periplasmic side of the membrane. Residues 104–125 (LMSLIGLRAITGIFEAPAFPTN) form a helical membrane-spanning segment. Residues 126 to 141 (NRMVTSWFPEHERASA) are Cytoplasmic-facing. Residues 142–164 (VGFYTSGQFVGLAFLTPLLIWIQ) form a helical membrane-spanning segment. Residues 165–168 (EMLS) are Periplasmic-facing. Residues 169–190 (WHWVFIVTGGIGIIWSLIWFKV) form a helical membrane-spanning segment. At 191–241 (YQPPRLTKGISKAELDYIRDGGGLVDGDAPVKKEARQPLTAKDWKLVFHRK) the chain is on the cytoplasmic side. A helical transmembrane segment spans residues 242–267 (LIGVYLGQFAVASTLWFFLTWFPNYL). Topologically, residues 268–276 (TQEKGITAL) are periplasmic. The chain crosses the membrane as a helical span at residues 277 to 297 (KAGFMTTVPFLAAFVGVLLSG). Topologically, residues 298–314 (WVADLLVRKGFSLGFAR) are cytoplasmic. A helical transmembrane segment spans residues 315–333 (KTPIICGLLISTCIMGANY). Residues 334–336 (TND) are Periplasmic-facing. A helical transmembrane segment spans residues 337–354 (PMMIMCLMALAFFGNGFA). Residues 355-373 (SITWSLVSSLAPMRLIGLT) lie on the Cytoplasmic side of the membrane. Tryptophan 358 provides a ligand contact to D-galactonate. The chain crosses the membrane as a helical span at residues 374-395 (GGVFNFAGGLGGITVPLVVGYL). At 396–400 (AQGYG) the chain is on the periplasmic side. The helical transmembrane segment at 401–423 (FAPALVYISAVALIGALSYILLV) threads the bilayer. Topologically, residues 424 to 430 (GDVKRVG) are cytoplasmic.

It belongs to the major facilitator superfamily. Phthalate permease family.

Its subcellular location is the cell inner membrane. The enzyme catalyses D-galactonate(in) + H(+)(in) = D-galactonate(out) + H(+)(out). Its function is as follows. Involved in D-galactonate metabolism. Catalyzes the proton-dependent uptake of galactonate into the cell. The polypeptide is D-galactonate transporter (dgoT) (Escherichia coli O6:H1 (strain CFT073 / ATCC 700928 / UPEC)).